Reading from the N-terminus, the 576-residue chain is N-acetylmuramoyl-L-alanine amidase (576 aa).

Positions 1-21 (MAQGVLWILLGLLLWSDPGTA) are cleaved as a signal peptide. Asn77 carries an N-linked (GlcNAc...) asparagine glycan. The residue at position 239 (Ser239) is a Phosphoserine. 2 positions are modified to deamidated asparagine: Asn274 and Asn322. N-linked (GlcNAc...) asparagine glycosylation occurs at Asn367. The N-acetylmuramoyl-L-alanine amidase domain maps to 406–532 (FLYVHHTYVP…RQLVRTDCPG (127 aa)). His410 is a binding site for Zn(2+). Cys419 and Cys425 are disulfide-bonded. An N-linked (GlcNAc...) asparagine glycan is attached at Asn485. Zn(2+) is bound by residues His522 and Cys530. Residues 550 to 576 (KPRPARSVSKRSRREPPPRTLPATDLQ) form a disordered region.

This sequence belongs to the N-acetylmuramoyl-L-alanine amidase 2 family. Zn(2+) serves as cofactor. As to expression, strongly expressed in liver and fetal liver, and secreted into serum. Expressed to a much lesser extent in transverse colon, lymph nodes, heart, thymus, pancreas, descending colon, stomach and testis. Isoform 2 is not detected in the liver or serum.

The protein resides in the secreted. It localises to the membrane. The enzyme catalyses Hydrolyzes the link between N-acetylmuramoyl residues and L-amino acid residues in certain cell-wall glycopeptides.. Its function is as follows. May play a scavenger role by digesting biologically active peptidoglycan (PGN) into biologically inactive fragments. Has no direct bacteriolytic activity. The protein is N-acetylmuramoyl-L-alanine amidase (PGLYRP2) of Homo sapiens (Human).